A 267-amino-acid polypeptide reads, in one-letter code: Ras-related protein Rab-36 (267 aa).

GTP is bound by residues V68, G69, K70, T71, S72, D83, Y86, and T89. T71 is a binding site for Mg(2+). The Switch 1 motif lies at 76–94; the sequence is RLCKNVFDHDYKATIGVDF. Positions 89 and 112 each coordinate Mg(2+). A Switch 2 motif is present at residues 113-132; that stretch reads TAGQEKFKCIASAYYRGAQV. Positions 115, 172, 174, 203, 204, and 205 each coordinate GTP. 2 S-geranylgeranyl cysteine lipidation sites follow: C266 and C267.

Belongs to the small GTPase superfamily. Rab family. Mg(2+) is required as a cofactor.

It is found in the golgi apparatus membrane. The enzyme catalyses GTP + H2O = GDP + phosphate + H(+). Regulated by guanine nucleotide exchange factors (GEFs) which promote the exchange of bound GDP for free GTP. Regulated by GTPase activating proteins (GAPs) which increase the GTP hydrolysis activity. Inhibited by GDP dissociation inhibitors (GDIs). Functionally, the small GTPases Rab are key regulators of intracellular membrane trafficking, from the formation of transport vesicles to their fusion with membranes. Rabs cycle between an inactive GDP-bound form and an active GTP-bound form that is able to recruit to membranes different sets of downstream effectors directly responsible for vesicle formation, movement, tethering and fusion. The sequence is that of Ras-related protein Rab-36 from Mus musculus (Mouse).